The chain runs to 291 residues: MTTESTSTVTAKIPAPATPYQGDIARYWNNEARPVNLRLGDVDGLYHHHYGIGAVDHAALGDPADSEYEKKLIAELHRLESAQAEFLMDHLGPIGSDDTLVDAGCGRGGSMVMAHRRFGCKVEGVTLSASQADFGNARARELRIEDHVRSRVCNMLDTPFDKGSIAASWNNESTMYVDLHDLFAEHSRFLEVGGRYVTITGCWNPRYGQPSKWVSQINAHFECNIHSRREYLRAMADNRLVPHTIVDLTPDTLPYWELRATSSLVTGIEKAFIESYRDGSFQYVLIAADRV.

The protein belongs to the geranyl diphosphate 2-C-methyltransferase family. The cofactor is Mg(2+).

It catalyses the reaction (2E)-geranyl diphosphate + S-adenosyl-L-methionine = (E)-2-methylgeranyl diphosphate + S-adenosyl-L-homocysteine + H(+). Catalyzes the SAM-dependent methylation of geranyl diphosphate (GPP) to yield (E)-2-methylgeranyl diphosphate (2-MeGPP). This Streptomyces ambofaciens (strain ATCC 23877 / 3486 / DSM 40053 / JCM 4204 / NBRC 12836 / NRRL B-2516) protein is Geranyl diphosphate 2-C-methyltransferase.